A 293-amino-acid polypeptide reads, in one-letter code: Triosephosphate isomerase (293 aa).

25 to 27 (NWK) contacts substrate. The Electrophile role is filled by H117. E218 serves as the catalytic Proton acceptor.

Belongs to the triosephosphate isomerase family. Homodimer.

The protein localises to the cytoplasm. It catalyses the reaction D-glyceraldehyde 3-phosphate = dihydroxyacetone phosphate. It functions in the pathway carbohydrate biosynthesis; gluconeogenesis. The protein operates within carbohydrate degradation; glycolysis; D-glyceraldehyde 3-phosphate from glycerone phosphate: step 1/1. Involved in the gluconeogenesis. Catalyzes stereospecifically the conversion of dihydroxyacetone phosphate (DHAP) to D-glyceraldehyde-3-phosphate (G3P). This Tropheryma whipplei (strain Twist) (Whipple's bacillus) protein is Triosephosphate isomerase.